The primary structure comprises 247 residues: Adenosylcobinamide-GDP ribazoletransferase (247 aa).

The next 5 helical transmembrane spans lie at 34-54 (IITF…VFMV), 59-79 (CGVP…TGGF), 113-133 (GGLA…ELAL), 138-158 (ILAS…LLMY), and 194-214 (VLLP…AIFI).

Belongs to the CobS family. It depends on Mg(2+) as a cofactor.

It localises to the cell inner membrane. It carries out the reaction alpha-ribazole + adenosylcob(III)inamide-GDP = adenosylcob(III)alamin + GMP + H(+). It catalyses the reaction alpha-ribazole 5'-phosphate + adenosylcob(III)inamide-GDP = adenosylcob(III)alamin 5'-phosphate + GMP + H(+). It participates in cofactor biosynthesis; adenosylcobalamin biosynthesis; adenosylcobalamin from cob(II)yrinate a,c-diamide: step 7/7. Joins adenosylcobinamide-GDP and alpha-ribazole to generate adenosylcobalamin (Ado-cobalamin). Also synthesizes adenosylcobalamin 5'-phosphate from adenosylcobinamide-GDP and alpha-ribazole 5'-phosphate. In Shigella dysenteriae serotype 1 (strain Sd197), this protein is Adenosylcobinamide-GDP ribazoletransferase.